The primary structure comprises 62 residues: UPF0434 protein ABO_2103 (62 aa).

The protein belongs to the UPF0434 family.

The chain is UPF0434 protein ABO_2103 from Alcanivorax borkumensis (strain ATCC 700651 / DSM 11573 / NCIMB 13689 / SK2).